Consider the following 137-residue polypeptide: Bacteriohemerythrin (137 aa).

The Fe cation site is built by His21, His53, Glu57, His72, His76, His112, and Asp117.

The protein belongs to the hemerythrin family. In terms of assembly, monomer.

In terms of biological role, oxygen-binding protein. May be involved in a storage mechanism or for delivery to oxygen-requiring enzymes. The oxygen-binding site contains two iron atoms. This is Bacteriohemerythrin from Ralstonia nicotianae (strain ATCC BAA-1114 / GMI1000) (Ralstonia solanacearum).